Here is a 649-residue protein sequence, read N- to C-terminus: MSGVSELLLPSPVPQGVEGVLHGLHGRWRGRAAHRRRLMQLAEQAERRCMALLGLPETQLQQQLLEIQSRFRRRLLTDDETLLAGVALVGELAWRAVQKRPYRVQFMGALAMHRGWLAEMATGEGKTLTVAVAAVLAGWSGRACHVISANDYLTERDAQQMTPLYEACGVTVASGGGALSPEERQLCYKADVVYVTAKTLLADYLRDQLATRQGAGRAQQGFAQWLTGGAQQPSAMMLGRGLHTVIIDEADSVLIDEAVTPLILAAPQKIPGMHGAVMWAAEVAERLHEEEDYTADRRTRQIQLLEGANQLMAAMAWRLDAVWRSEVRRQELVRHALSVRHFIRVGQHYLVQEDKVVLLDDATGRMTPERSLTAGLHQAIEAYEGVPLTDPNASMGQMSFQTFFRRFHRFCGTTGTARESTRELWRIYRLAVLPIPTHRPRQTVVHPTRVYATLEDKWQAVAAEVAQVHASGRPVLVGVRSVSSSEQLAAVLVEKGLSAQVLNARNHAEEAAIVSRAGQSGHVTIATNMAGRGTDIGLEEQTRSLGGLHVIIAECNSSARIDRQLAGRCGRQGDPGSVVTLLCLEEDVLRQQLSPALLGIARSLPRWGWAAGVLAGLVHYAQRRSEAQAYGQRRAVMQGDEWLNNALPF.

ATP-binding positions include Gln-105, 123–127 (GEGKT), and Asp-535.

The protein belongs to the SecA family. Monomer and homodimer. Part of the essential Sec protein translocation apparatus which comprises SecA, SecYEG and auxiliary proteins SecDF-YajC and YidC.

Its subcellular location is the cell inner membrane. The protein resides in the cytoplasm. The enzyme catalyses ATP + H2O + cellular proteinSide 1 = ADP + phosphate + cellular proteinSide 2.. In terms of biological role, part of the Sec protein translocase complex. Interacts with the SecYEG preprotein conducting channel. Has a central role in coupling the hydrolysis of ATP to the transfer of proteins into and across the cell membrane, serving both as a receptor for the preprotein-SecB complex and as an ATP-driven molecular motor driving the stepwise translocation of polypeptide chains across the membrane. This chain is Protein translocase subunit SecA 2, found in Magnetococcus marinus (strain ATCC BAA-1437 / JCM 17883 / MC-1).